Here is a 945-residue protein sequence, read N- to C-terminus: Valine--tRNA ligase (945 aa).

A 'HIGH' region motif is present at residues 42 to 52 (PNVTGTLHMGH). The 'KMSKS' region signature appears at 552 to 556 (KMSKS). Lys-555 contributes to the ATP binding site. Residues 879-945 (DKAAETARLS…VQNQLAKLKD (67 aa)) adopt a coiled-coil conformation.

Belongs to the class-I aminoacyl-tRNA synthetase family. ValS type 1 subfamily. In terms of assembly, monomer.

It is found in the cytoplasm. The enzyme catalyses tRNA(Val) + L-valine + ATP = L-valyl-tRNA(Val) + AMP + diphosphate. In terms of biological role, catalyzes the attachment of valine to tRNA(Val). As ValRS can inadvertently accommodate and process structurally similar amino acids such as threonine, to avoid such errors, it has a 'posttransfer' editing activity that hydrolyzes mischarged Thr-tRNA(Val) in a tRNA-dependent manner. The chain is Valine--tRNA ligase from Neisseria meningitidis serogroup B (strain ATCC BAA-335 / MC58).